A 365-amino-acid polypeptide reads, in one-letter code: Cobalt-precorrin-5B C(1)-methyltransferase (365 aa).

Belongs to the CbiD family.

It catalyses the reaction Co-precorrin-5B + S-adenosyl-L-methionine = Co-precorrin-6A + S-adenosyl-L-homocysteine. It functions in the pathway cofactor biosynthesis; adenosylcobalamin biosynthesis; cob(II)yrinate a,c-diamide from sirohydrochlorin (anaerobic route): step 6/10. Catalyzes the methylation of C-1 in cobalt-precorrin-5B to form cobalt-precorrin-6A. The protein is Cobalt-precorrin-5B C(1)-methyltransferase of Methanococcus maripaludis (strain C5 / ATCC BAA-1333).